The sequence spans 351 residues: uncharacterized protein (351 aa).

Positions 215, 226, 290, 319, and 333 each coordinate Mn(2+).

It belongs to the peptidase M24B family. It depends on Mn(2+) as a cofactor.

This is an uncharacterized protein from Staphylococcus aureus (strain USA300).